A 71-amino-acid chain; its full sequence is Small ribosomal subunit protein bS21 (71 aa).

The tract at residues 39–71 is disordered; it reads EKPTTVRKRAKAAAQKRHAKKLARENARRVRLY. Positions 43 to 59 are enriched in basic residues; it reads TVRKRAKAAAQKRHAKK. Residues 60–71 show a composition bias toward basic and acidic residues; sequence LARENARRVRLY.

It belongs to the bacterial ribosomal protein bS21 family.

This Vibrio atlanticus (strain LGP32) (Vibrio splendidus (strain Mel32)) protein is Small ribosomal subunit protein bS21.